A 338-amino-acid polypeptide reads, in one-letter code: Ketol-acid reductoisomerase (NADP(+)) (338 aa).

In terms of domain architecture, KARI N-terminal Rossmann spans 1–181; sequence MKVFYDKDCD…GGGRTGIIET (181 aa). NADP(+)-binding positions include 24-27, arginine 47, serine 50, threonine 52, and 82-85; these read YGSQ and DEFQ. Residue histidine 107 is part of the active site. Glycine 133 contacts NADP(+). The region spanning 182-327 is the KARI C-terminal knotted domain; it reads TFKDETETDL…EQLRSMMPWI (146 aa). Residues aspartate 190, glutamate 194, glutamate 226, and glutamate 230 each contribute to the Mg(2+) site. Serine 251 is a binding site for substrate.

Belongs to the ketol-acid reductoisomerase family. Mg(2+) is required as a cofactor.

It carries out the reaction (2R)-2,3-dihydroxy-3-methylbutanoate + NADP(+) = (2S)-2-acetolactate + NADPH + H(+). It catalyses the reaction (2R,3R)-2,3-dihydroxy-3-methylpentanoate + NADP(+) = (S)-2-ethyl-2-hydroxy-3-oxobutanoate + NADPH + H(+). It functions in the pathway amino-acid biosynthesis; L-isoleucine biosynthesis; L-isoleucine from 2-oxobutanoate: step 2/4. The protein operates within amino-acid biosynthesis; L-valine biosynthesis; L-valine from pyruvate: step 2/4. Its function is as follows. Involved in the biosynthesis of branched-chain amino acids (BCAA). Catalyzes an alkyl-migration followed by a ketol-acid reduction of (S)-2-acetolactate (S2AL) to yield (R)-2,3-dihydroxy-isovalerate. In the isomerase reaction, S2AL is rearranged via a Mg-dependent methyl migration to produce 3-hydroxy-3-methyl-2-ketobutyrate (HMKB). In the reductase reaction, this 2-ketoacid undergoes a metal-dependent reduction by NADPH to yield (R)-2,3-dihydroxy-isovalerate. The polypeptide is Ketol-acid reductoisomerase (NADP(+)) (Pseudomonas putida (strain ATCC 700007 / DSM 6899 / JCM 31910 / BCRC 17059 / LMG 24140 / F1)).